The following is a 146-amino-acid chain: Protein archease (146 aa).

Residues Asp-16, Asp-145, and Ile-146 each coordinate Ca(2+).

It belongs to the archease family.

Its function is as follows. Activates the tRNA-splicing ligase complex by facilitating the enzymatic turnover of catalytic subunit RtcB. Acts by promoting the guanylylation of RtcB, a key intermediate step in tRNA ligation. Can also alter the NTP specificity of RtcB such that ATP, dGTP or ITP is used efficiently. The chain is Protein archease from Methanosarcina mazei (strain ATCC BAA-159 / DSM 3647 / Goe1 / Go1 / JCM 11833 / OCM 88) (Methanosarcina frisia).